A 78-amino-acid polypeptide reads, in one-letter code: D-alanyl carrier protein (78 aa).

A Carrier domain is found at 1–78; sequence MNIQETVLNI…QIIQQVEALQ (78 aa). Serine 36 bears the O-(pantetheine 4'-phosphoryl)serine mark.

It belongs to the DltC family. Post-translationally, 4'-phosphopantetheine is transferred from CoA to a specific serine of apo-DCP.

The protein localises to the cytoplasm. It functions in the pathway cell wall biogenesis; lipoteichoic acid biosynthesis. Its function is as follows. Carrier protein involved in the D-alanylation of lipoteichoic acid (LTA). The loading of thioester-linked D-alanine onto DltC is catalyzed by D-alanine--D-alanyl carrier protein ligase DltA. The DltC-carried D-alanyl group is further transferred to cell membrane phosphatidylglycerol (PG) by forming an ester bond, probably catalyzed by DltD. D-alanylation of LTA plays an important role in modulating the properties of the cell wall in Gram-positive bacteria, influencing the net charge of the cell wall. This chain is D-alanyl carrier protein, found in Enterococcus faecalis (strain ATCC 700802 / V583).